Here is a 146-residue protein sequence, read N- to C-terminus: Anti-sigma F factor (146 aa).

It belongs to the anti-sigma-factor family.

It catalyses the reaction L-seryl-[protein] + ATP = O-phospho-L-seryl-[protein] + ADP + H(+). It carries out the reaction L-threonyl-[protein] + ATP = O-phospho-L-threonyl-[protein] + ADP + H(+). In terms of biological role, binds to sigma F and blocks its ability to form an RNA polymerase holoenzyme (E-sigma F). Phosphorylates SpoIIAA on a serine residue. This phosphorylation may enable SpoIIAA to act as an anti-anti-sigma factor that counteracts SpoIIAB and thus releases sigma F from inhibition. This Geobacillus stearothermophilus (Bacillus stearothermophilus) protein is Anti-sigma F factor.